A 474-amino-acid chain; its full sequence is MSTSAGTPTSAHAPLSIAPASTPHQRSLSVKPLAAAPSPAPVTQCSITSKEWIVPPRPKPGRKPATDTPPTKRKAQNRAAQRAFRERRAARVGELEEQIKKIEEENEREEAALKKTIQQQQQQIEEYKSQLLWWKNRCKAVEDELMTEKVAKEDAIKQLERINNSGRTTNNGNSVIGGCERCSSTRCQCIDDAFNIANITQMQTDDPHSKRGRSPSQGATQKRHRSNPEIKTEPEDLETDFTHSFSLRRHSRTGNDATTPILLDPCGFCQDGSPCICAEMAEDQPSDRSNQPSQLTKLPPIQNISQFTPPPSEGDVLSKSATLVSSNKSNPCANGPGTCAQCLADPRSSVFCKSLAASRASTRQEGGCCGGGGGKDGCCKNRSSGSDSSKQATSPITLSCADTFTTLSLHPKFASASNELSNWIPQLHTLPNPQNLNPDRRRDQNLTNRPALEVEAASVMGVLRYFDRRFADSK.

Positions 1–10 (MSTSAGTPTS) are enriched in polar residues. Residues 1–82 (MSTSAGTPTS…RKAQNRAAQR (82 aa)) form a disordered region. A bZIP domain is found at 67–108 (DTPPTKRKAQNRAAQRAFRERRAARVGELEEQIKKIEEENER). The segment at 72-91 (KRKAQNRAAQRAFRERRAAR) is basic motif. Positions 95–102 (LEEQIKKI) are leucine-zipper. Disordered regions lie at residues 201-242 (QMQT…TDFT), 282-317 (EDQP…GDVL), and 429-449 (TLPN…LTNR). Residues 287–307 (DRSNQPSQLTKLPPIQNISQF) show a composition bias toward polar residues.

The protein belongs to the bZIP family. YAP subfamily.

Its subcellular location is the nucleus. Its function is as follows. Iron regulator crucial for the adaptation to iron starvation and iron excess, but is dispensable for virulence. SreA represses the expression of hapX and the siderophore system during iron sufficient conditions by an iron-sensing mechanism, while hapX represses sreA and activates the siderophore system during iron-limiting conditions, resulting in efficient iron uptake and inhibition of iron-consuming pathways. HapX targets include genes encoding a number of key iron-regulated factors such as the vacuolar iron importer cccA, as well as hemA, cycA and lysF involved in heme biosynthesis, respiration and lysine biosynthesis, respectively. Activation of the vacuolar iron importer cccA during high iron conditions is essential for iron detoxification. The chain is bZIP transcription factor hapX from Arthroderma benhamiae (strain ATCC MYA-4681 / CBS 112371) (Trichophyton mentagrophytes).